Reading from the N-terminus, the 242-residue chain is Proteasome subunit alpha (242 aa).

This sequence belongs to the peptidase T1A family. The 20S proteasome core is composed of 14 alpha and 14 beta subunits that assemble into four stacked heptameric rings, resulting in a barrel-shaped structure. The two inner rings, each composed of seven catalytic beta subunits, are sandwiched by two outer rings, each composed of seven alpha subunits. The catalytic chamber with the active sites is on the inside of the barrel. Has a gated structure, the ends of the cylinder being occluded by the N-termini of the alpha-subunits. Is capped at one or both ends by the proteasome regulatory ATPase, PAN.

It is found in the cytoplasm. Its activity is regulated as follows. The formation of the proteasomal ATPase PAN-20S proteasome complex, via the docking of the C-termini of PAN into the intersubunit pockets in the alpha-rings, triggers opening of the gate for substrate entry. Interconversion between the open-gate and close-gate conformations leads to a dynamic regulation of the 20S proteasome proteolysis activity. Functionally, component of the proteasome core, a large protease complex with broad specificity involved in protein degradation. This is Proteasome subunit alpha from Sulfolobus acidocaldarius (strain ATCC 33909 / DSM 639 / JCM 8929 / NBRC 15157 / NCIMB 11770).